The sequence spans 420 residues: Serine hydroxymethyltransferase (420 aa).

(6S)-5,6,7,8-tetrahydrofolate contacts are provided by residues L121 and 125-127; that span reads GHL. An N6-(pyridoxal phosphate)lysine modification is found at K230. Residues E246 and 354–356 each bind (6S)-5,6,7,8-tetrahydrofolate; that span reads SPF.

Belongs to the SHMT family. Homodimer. Requires pyridoxal 5'-phosphate as cofactor.

It localises to the cytoplasm. It carries out the reaction (6R)-5,10-methylene-5,6,7,8-tetrahydrofolate + glycine + H2O = (6S)-5,6,7,8-tetrahydrofolate + L-serine. It participates in one-carbon metabolism; tetrahydrofolate interconversion. The protein operates within amino-acid biosynthesis; glycine biosynthesis; glycine from L-serine: step 1/1. Functionally, catalyzes the reversible interconversion of serine and glycine with tetrahydrofolate (THF) serving as the one-carbon carrier. This reaction serves as the major source of one-carbon groups required for the biosynthesis of purines, thymidylate, methionine, and other important biomolecules. Also exhibits THF-independent aldolase activity toward beta-hydroxyamino acids, producing glycine and aldehydes, via a retro-aldol mechanism. The protein is Serine hydroxymethyltransferase of Rickettsia prowazekii (strain Madrid E).